The primary structure comprises 139 residues: uncharacterized protein (139 aa).

Residues 9–133 (QAAQIRIARP…DGWRIVFMNS (125 aa)) form the VOC domain.

This is an uncharacterized protein from Bacillus subtilis (strain 168).